A 548-amino-acid polypeptide reads, in one-letter code: GLC7-interacting protein 2 (548 aa).

The segment covering 1 to 23 (MYIKAEQKPQQFERKNEKLDRNK) has biased composition (basic and acidic residues). Disordered regions lie at residues 1–54 (MYIK…STEE) and 118–143 (VESL…STVP). At S51 the chain carries Phosphoserine. Phosphothreonine is present on T52. S155 is modified (phosphoserine). A disordered region spans residues 191–212 (RSKSLPTTPGIRSGNGVQARDG). A phosphoserine mark is found at S221 and S238. Residues 293 to 346 (FAHPAKISNPNNGKGTNNTKLRKSKRFQNLLKNRTDMPPSKSNKKFVNGGGAHE) are disordered. A CBM21 domain is found at 419–534 (HNGNDCNGVA…NNNGNNYKVD (116 aa)).

In terms of assembly, interacts with phosphatase 1 (GLC7).

This is GLC7-interacting protein 2 (GIP2) from Saccharomyces cerevisiae (strain ATCC 204508 / S288c) (Baker's yeast).